The chain runs to 273 residues: HTH-type transcriptional activator RhaS (273 aa).

The region spanning 174 to 272 is the HTH araC/xylS-type domain; sequence YQLLDWLQNN…SQSPRDLRSQ (99 aa). 2 consecutive DNA-binding regions (H-T-H motif) follow at residues 191–212 and 239–262; these read PELA…KNKT and VTDI…KREF.

Binds DNA as a dimer.

It is found in the cytoplasm. Activates expression of the rhaBAD and rhaT operons. This chain is HTH-type transcriptional activator RhaS, found in Yersinia pestis bv. Antiqua (strain Angola).